The primary structure comprises 303 residues: MSTVISLPKVNGEYRKNFKLSHLTWFKVGGISQVFYKPKDEHDLSYFLANLQSNIKITVLGAGSNLLIRDNGIDGVTIKLGRSFNEINFVKNNHYNIISVGAGTLNYDVAKFCLQHNLGGLEFLVGIPGTIGGGIAMNAGAYGQEFKDVVYSVEALDRSGNKHIFLSKDLNFEYRQCIVNGFLIFTKTNLICYNDSKPSISQKLQKIQTVRKLTQPINQKTAGSAFRNTNNYKAWQLIDKVGLRGHSIGGAQVSNLHCNFLINNGNATASDIENLGELIRKKVFDHTGITLEWEIKIVGKKSL.

An FAD-binding PCMH-type domain is found at 27-217 (KVGGISQVFY…QTVRKLTQPI (191 aa)). Arg-175 is a catalytic residue. The active-site Proton donor is the Ser-224. Glu-294 is an active-site residue.

This sequence belongs to the MurB family. The cofactor is FAD.

It is found in the cytoplasm. It catalyses the reaction UDP-N-acetyl-alpha-D-muramate + NADP(+) = UDP-N-acetyl-3-O-(1-carboxyvinyl)-alpha-D-glucosamine + NADPH + H(+). The protein operates within cell wall biogenesis; peptidoglycan biosynthesis. In terms of biological role, cell wall formation. The protein is UDP-N-acetylenolpyruvoylglucosamine reductase of Orientia tsutsugamushi (strain Ikeda) (Rickettsia tsutsugamushi).